A 618-amino-acid polypeptide reads, in one-letter code: Leucine aminopeptidase 2 (618 aa).

Residues 140-142 (QCQ) and 272-277 (PYGGME) contribute to the a peptide site. His301 lines the Zn(2+) pocket. Residue Glu302 is the Proton acceptor of the active site. Positions 305 and 324 each coordinate Zn(2+). Residue Tyr389 is the Proton donor of the active site.

This sequence belongs to the peptidase M1 family. It depends on Zn(2+) as a cofactor.

It is found in the cytoplasm. The protein localises to the nucleus. It carries out the reaction an epoxide + H2O = an ethanediol. Aminopeptidase that preferentially cleaves di- and tripeptides. Also has low epoxide hydrolase activity (in vitro). Can hydrolyze the epoxide leukotriene LTA(4) but it forms preferentially 5,6-dihydroxy-7,9,11,14-eicosatetraenoic acid rather than the cytokine leukotriene B(4) as the product compared to the homologous mammalian enzyme (in vitro). In Emericella nidulans (strain FGSC A4 / ATCC 38163 / CBS 112.46 / NRRL 194 / M139) (Aspergillus nidulans), this protein is Leucine aminopeptidase 2.